A 617-amino-acid polypeptide reads, in one-letter code: Protein fem-1 homolog C (617 aa).

Met1 carries the post-translational modification N-acetylmethionine. 7 ANK repeats span residues Asp2 to Val31, Asn40 to Val70, Glu82 to Asn111, Thr115 to Val144, His148 to Arg177, Lys181 to Lys210, and Tyr213 to Thr242. TPR repeat units follow at residues Ile245 to Asp279 and Ser338 to Asn371. ANK repeat units follow at residues Asn481–Val523 and Asp527–Ala556.

It belongs to the fem-1 family. In terms of assembly, component of a Cul2-RING (CRL2) E3 ubiquitin-protein ligase complex, also named ECS (Elongin BC-CUL2/5-SOCS-box protein) complex, composed of CUL2, Elongin BC (ELOB and ELOC), RBX1 and substrate-specific adapter FEM1C. In terms of tissue distribution, widely expressed. Highly expressed in kidney, cardiac tissue, skeletal muscle and testis. Expressed at lower levels in other tissues, including cartilage.

It participates in protein modification; protein ubiquitination. Its function is as follows. Substrate-recognition component of a Cul2-RING (CRL2) E3 ubiquitin-protein ligase complex of the DesCEND (destruction via C-end degrons) pathway, which recognizes a C-degron located at the extreme C terminus of target proteins, leading to their ubiquitination and degradation. The C-degron recognized by the DesCEND pathway is usually a motif of less than ten residues and can be present in full-length proteins, truncated proteins or proteolytically cleaved forms. The CRL2(FEM1C) complex specifically recognizes proteins with an arginine at the C-terminus: recognizes and binds proteins ending with -Lys/Arg-Xaa-Arg and -Lys/Arg-Xaa-Xaa-Arg C-degrons, such as SIL1 or OR51B2, leading to their ubiquitination and degradation. The CRL2(FEM1C) complex mediates ubiquitination and degradation of truncated MSRB1/SEPX1 selenoproteins produced by failed UGA/Sec decoding. Promotes ubiquitination and degradation of SLBP. In Homo sapiens (Human), this protein is Protein fem-1 homolog C.